The following is a 502-amino-acid chain: ATP synthase subunit alpha (502 aa).

169-176 serves as a coordination point for ATP; the sequence is GDRQTGKT.

Belongs to the ATPase alpha/beta chains family. F-type ATPases have 2 components, CF(1) - the catalytic core - and CF(0) - the membrane proton channel. CF(1) has five subunits: alpha(3), beta(3), gamma(1), delta(1), epsilon(1). CF(0) has three main subunits: a(1), b(2) and c(9-12). The alpha and beta chains form an alternating ring which encloses part of the gamma chain. CF(1) is attached to CF(0) by a central stalk formed by the gamma and epsilon chains, while a peripheral stalk is formed by the delta and b chains.

The protein localises to the cell inner membrane. It catalyses the reaction ATP + H2O + 4 H(+)(in) = ADP + phosphate + 5 H(+)(out). In terms of biological role, produces ATP from ADP in the presence of a proton gradient across the membrane. The alpha chain is a regulatory subunit. The polypeptide is ATP synthase subunit alpha (Oleidesulfovibrio alaskensis (strain ATCC BAA-1058 / DSM 17464 / G20) (Desulfovibrio alaskensis)).